Consider the following 641-residue polypeptide: Raffinose carrier protein (641 aa).

The tract at residues 1-506 (MQEEHNYKWV…GQVIPLAQVN (506 aa)) is permease. A run of 12 helical transmembrane segments spans residues 25 to 45 (AFYS…LFDT), 57 to 77 (LVTL…PFIG), 93 to 113 (WVVV…TNLG), 120 to 140 (AMIY…FYSF), 168 to 188 (LGST…VIFF), 201 to 221 (WFIF…GVGL), 253 to 273 (LLWA…LGSL), 288 to 308 (FSIL…LFPV), 317 to 337 (GVFA…TIAG), 342 to 362 (LVLL…LVVL), 394 to 414 (FGGA…GMTT), and 429 to 449 (FKLT…GIFS). Positions 507 to 611 (DPTFAAGTLG…DDTVIMTVTN (105 aa)) constitute a PTS EIIA type-1 domain. H559 is modified (phosphohistidine; by HPr).

It in the N-terminal section; belongs to the sodium:galactoside symporter (TC 2.A.2) family.

It is found in the cell membrane. The sequence is that of Raffinose carrier protein (rafP) from Pediococcus pentosaceus.